Reading from the N-terminus, the 262-residue chain is Acyl-[acyl-carrier-protein]--UDP-N-acetylglucosamine O-acyltransferase (262 aa).

It belongs to the transferase hexapeptide repeat family. LpxA subfamily. In terms of assembly, homotrimer.

It localises to the cytoplasm. The enzyme catalyses a (3R)-hydroxyacyl-[ACP] + UDP-N-acetyl-alpha-D-glucosamine = a UDP-3-O-[(3R)-3-hydroxyacyl]-N-acetyl-alpha-D-glucosamine + holo-[ACP]. Its pathway is glycolipid biosynthesis; lipid IV(A) biosynthesis; lipid IV(A) from (3R)-3-hydroxytetradecanoyl-[acyl-carrier-protein] and UDP-N-acetyl-alpha-D-glucosamine: step 1/6. Functionally, involved in the biosynthesis of lipid A, a phosphorylated glycolipid that anchors the lipopolysaccharide to the outer membrane of the cell. The chain is Acyl-[acyl-carrier-protein]--UDP-N-acetylglucosamine O-acyltransferase from Salmonella typhi.